Here is a 160-residue protein sequence, read N- to C-terminus: Probable cyclic pyranopterin monophosphate synthase (160 aa).

Residues 1–12 show a composition bias toward basic and acidic residues; the sequence is MSDDSELTHVTD. The tract at residues 1-24 is disordered; the sequence is MSDDSELTHVTDDGDAQMVDVGEK. Substrate contacts are provided by residues 78–80 and 114–115; these read MCH and ME. Residue Asp129 is part of the active site.

This sequence belongs to the MoaC family. Homohexamer; trimer of dimers.

It catalyses the reaction (8S)-3',8-cyclo-7,8-dihydroguanosine 5'-triphosphate = cyclic pyranopterin phosphate + diphosphate. It participates in cofactor biosynthesis; molybdopterin biosynthesis. In terms of biological role, catalyzes the conversion of (8S)-3',8-cyclo-7,8-dihydroguanosine 5'-triphosphate to cyclic pyranopterin monophosphate (cPMP). The protein is Probable cyclic pyranopterin monophosphate synthase of Natronomonas pharaonis (strain ATCC 35678 / DSM 2160 / CIP 103997 / JCM 8858 / NBRC 14720 / NCIMB 2260 / Gabara) (Halobacterium pharaonis).